The primary structure comprises 39 residues: Cytochrome b6-f complex subunit 5 (39 aa).

The helical transmembrane segment at 5-25 (LLCGIVLGLVPITIVGLFVSA) threads the bilayer.

It belongs to the PetG family. In terms of assembly, the 4 large subunits of the cytochrome b6-f complex are cytochrome b6, subunit IV (17 kDa polypeptide, PetD), cytochrome f and the Rieske protein, while the 4 small subunits are PetG, PetL, PetM and PetN. The complex functions as a dimer.

The protein localises to the cellular thylakoid membrane. Functionally, component of the cytochrome b6-f complex, which mediates electron transfer between photosystem II (PSII) and photosystem I (PSI), cyclic electron flow around PSI, and state transitions. PetG is required for either the stability or assembly of the cytochrome b6-f complex. The chain is Cytochrome b6-f complex subunit 5 from Prochlorococcus marinus (strain MIT 9211).